A 317-amino-acid polypeptide reads, in one-letter code: Peroxisome biogenesis protein 7 (317 aa).

WD repeat units lie at residues 58 to 98 (DTAD…PSNP), 104 to 144 (EHAR…SVRT), 147 to 187 (EHAY…STMI), 190 to 230 (AHDF…VPLA), 234 to 274 (GHGY…ALVG), and 278 to 317 (HHTEFAVGIDMSVLVEGLMASTGWDELVYVWQQGMDPRAS).

Belongs to the WD repeat peroxin-7 family. Interacts with PEX5; interaction only takes place when PEX7 is associated with cargo proteins. Interacts with PEX13 (via N-terminus) and PEX12 (via C-terminus), but not with PEX14. In terms of tissue distribution, expressed in siliques and leaves, but barely detectable in flowers, stems and roots.

The protein resides in the cytoplasm. The protein localises to the cytosol. It is found in the peroxisome matrix. In terms of biological role, receptor required for the peroxisomal import of proteins containing a C-terminal PTS2-type peroxisomal targeting signal. Specifically binds to cargo proteins containing a PTS2 peroxisomal targeting signal in the cytosol. Cargo protein-binding triggers interaction with PEX5 and formation of a ternary complex composed of PEX5 and PEX7 along with PTS2-containing cargo proteins, which is tranlocated into peroxisomes by passing through the PEX13-PEX14 docking complex. The sequence is that of Peroxisome biogenesis protein 7 (PEX7) from Arabidopsis thaliana (Mouse-ear cress).